The chain runs to 428 residues: Enolase 1 (428 aa).

Position 167 (Gln167) interacts with (2R)-2-phosphoglycerate. Catalysis depends on Glu209, which acts as the Proton donor. Residues Asp246, Glu288, and Asp315 each coordinate Mg(2+). The (2R)-2-phosphoglycerate site is built by Lys340, Arg369, Ser370, and Lys391. The active-site Proton acceptor is the Lys340.

It belongs to the enolase family. In terms of assembly, component of the RNA degradosome, a multiprotein complex involved in RNA processing and mRNA degradation. The cofactor is Mg(2+).

It localises to the cytoplasm. Its subcellular location is the secreted. It is found in the cell surface. The enzyme catalyses (2R)-2-phosphoglycerate = phosphoenolpyruvate + H2O. It functions in the pathway carbohydrate degradation; glycolysis; pyruvate from D-glyceraldehyde 3-phosphate: step 4/5. Functionally, catalyzes the reversible conversion of 2-phosphoglycerate (2-PG) into phosphoenolpyruvate (PEP). It is essential for the degradation of carbohydrates via glycolysis. The sequence is that of Enolase 1 from Pseudomonas syringae pv. syringae (strain B728a).